Here is an 88-residue protein sequence, read N- to C-terminus: UPF0223 protein YktA (88 aa).

It belongs to the UPF0223 family.

The protein is UPF0223 protein YktA (yktA) of Bacillus subtilis (strain 168).